The following is a 273-amino-acid chain: 2,3,4,5-tetrahydropyridine-2,6-dicarboxylate N-succinyltransferase (273 aa).

Substrate is bound by residues arginine 104 and aspartate 141.

It belongs to the transferase hexapeptide repeat family. Homotrimer.

Its subcellular location is the cytoplasm. The enzyme catalyses (S)-2,3,4,5-tetrahydrodipicolinate + succinyl-CoA + H2O = (S)-2-succinylamino-6-oxoheptanedioate + CoA. Its pathway is amino-acid biosynthesis; L-lysine biosynthesis via DAP pathway; LL-2,6-diaminopimelate from (S)-tetrahydrodipicolinate (succinylase route): step 1/3. This is 2,3,4,5-tetrahydropyridine-2,6-dicarboxylate N-succinyltransferase from Psychrobacter cryohalolentis (strain ATCC BAA-1226 / DSM 17306 / VKM B-2378 / K5).